Reading from the N-terminus, the 153-residue chain is SsrA-binding protein (153 aa).

It belongs to the SmpB family.

Its subcellular location is the cytoplasm. In terms of biological role, required for rescue of stalled ribosomes mediated by trans-translation. Binds to transfer-messenger RNA (tmRNA), required for stable association of tmRNA with ribosomes. tmRNA and SmpB together mimic tRNA shape, replacing the anticodon stem-loop with SmpB. tmRNA is encoded by the ssrA gene; the 2 termini fold to resemble tRNA(Ala) and it encodes a 'tag peptide', a short internal open reading frame. During trans-translation Ala-aminoacylated tmRNA acts like a tRNA, entering the A-site of stalled ribosomes, displacing the stalled mRNA. The ribosome then switches to translate the ORF on the tmRNA; the nascent peptide is terminated with the 'tag peptide' encoded by the tmRNA and targeted for degradation. The ribosome is freed to recommence translation, which seems to be the essential function of trans-translation. This chain is SsrA-binding protein, found in Orientia tsutsugamushi (strain Boryong) (Rickettsia tsutsugamushi).